A 201-amino-acid chain; its full sequence is TATA-box-binding protein 2 (201 aa).

2 consecutive repeat copies span residues 26 to 102 and 116 to 193.

The protein belongs to the TBP family. Belongs to the TFIID complex together with the TBP-associated factors (TAFs). Binds DNA as monomer.

It localises to the nucleus. Functionally, general transcription factor that functions at the core of the DNA-binding multiprotein factor TFIID. Binding of TFIID to the TATA box is the initial transcriptional step of the pre-initiation complex (PIC), playing a role in the activation of eukaryotic genes transcribed by RNA polymerase II. This Triticum aestivum (Wheat) protein is TATA-box-binding protein 2 (TBP2).